The following is a 262-amino-acid chain: MKRLEGKVAIVTSSTRGIGRASAEALAKEGALVYLAARSEELANEVIADIKKQGGVAKFVYFNAREEETYTSMVEKVAEAEGRIDILVNNYGGTNVNLDKNLTAGDTDEFFRILKDNVQSVYLPAKAAIPHMEKVGGGSIVNISTIGSVVPDISRIAYCVSKSAINSLTQNIALQYARKNIRCNAVLPGLIGTRAALENMTDEFRDSFLGHVPLNRVGRPEDIANAVLYYASDDSGYVTGMIHEVAGGFALGTPQYSEYCPR.

NADP(+)-binding positions include 13-18 (SSTRGI), arginine 38, 63-64 (NA), and asparagine 90. Taurochenodeoxycholate contacts are provided by threonine 145 and tyrosine 158. NADP(+) is bound by residues tyrosine 158, lysine 162, and 191–195 (IGTRA). Tyrosine 158 functions as the Proton acceptor in the catalytic mechanism.

The protein belongs to the short-chain dehydrogenases/reductases (SDR) family. In terms of assembly, homotetramer. A dynamic equilibrium between dimers and tetramers seems to exist.

The catalysed reaction is cholate + NADP(+) = 3alpha,12alpha-dihydroxy-7-oxo-5beta-cholanate + NADPH + H(+). It carries out the reaction chenodeoxycholate + NADP(+) = 7-oxolithocholate + NADPH + H(+). It catalyses the reaction 3alpha,7alpha-dihydroxy-12-oxo-5beta-cholanate + NADP(+) = 7,12-dioxo-lithocholate + NADPH + H(+). The enzyme catalyses 7alpha-hydroxy-3,12-dioxo-5beta-cholanate + NADP(+) = dehydrocholate + NADPH + H(+). The catalysed reaction is glycochenodeoxycholate + NADP(+) = 7-oxoglycolithocholate + NADPH + H(+). It carries out the reaction taurochenodeoxycholate + NADP(+) = 7-oxotaurolithocholate + NADPH + H(+). Activated by metal ions such as Mg(2+), Na(+) and K(+). Its function is as follows. 7alpha-hydroxysteroid dehydrogenase that catalyzes the NADP(+)-dependent oxidation of the 7alpha-hydroxy group of 7alpha-hydroxysteroids, such as cholate, chenodeoxycholate, glycochenodeoxycholate and taurochenodeoxycholate, to the corresponding 7-oxosteroids. Is also able to catalyze the reverse reduction reactions. Together with 7beta-HSDH encoded in the adjacent gene, is likely involved in the epimerization of the hydroxy group at C-7 of primary bile acids through 7-keto bile acid intermediates. The chain is 7alpha-hydroxysteroid dehydrogenase from Clostridium sardiniense (Clostridium absonum).